An 803-amino-acid chain; its full sequence is Chromatin structure-remodeling complex subunit rsc1 (803 aa).

Residues 9-117 (ADDKKLQRVL…EFCIQQLRTF (109 aa)) form the Bromo 1 domain. Residues 128-154 (WPNTDSPSATTSSPISRNPEYSVSPPN) show a composition bias toward polar residues. Residues 128–160 (WPNTDSPSATTSSPISRNPEYSVSPPNGSKFVK) form a disordered region. Ser168 is subject to Phosphoserine. The tract at residues 174–206 (EEDSDVKGRSMVGRDGRYKSEDLKRRKLQPSSK) is disordered. The segment covering 178-197 (DVKGRSMVGRDGRYKSEDLK) has biased composition (basic and acidic residues). In terms of domain architecture, Bromo 2 spans 206–316 (KPLSSLEARA…NYLADVLRLE (111 aa)). Phosphoserine is present on residues Ser331 and Ser334. The BAH domain maps to 351-469 (TLLNVGDWVL…DDTKQFSKIK (119 aa)). Positions 512–525 (GLPSPATTDSNTHM) are enriched in polar residues. The tract at residues 512–616 (GLPSPATTDS…RTSTKSTSPI (105 aa)) is disordered. Low complexity predominate over residues 526-539 (LPSQGSLLPPSSIS). Polar residues-rich tracts occupy residues 540-553 (ETKS…TPLS) and 605-615 (IMRTSTKSTSP).

Belongs to the RSC1 family. As to quaternary structure, component of the RSC complex composed of at least arp9, arp42, rsc1, rsc4, rsc7, rsc9, rsc58, sfh1, snf21, ssr1, ssr2, ssr3 and ssr4. The complex interacts with histone and histone variant components of centromeric chromatin.

It is found in the nucleus. Functionally, component of the chromatin structure remodeling complex (RSC), which is involved in transcription regulation and nucleosome positioning. Controls particularly membrane and organelle development genes. The protein is Chromatin structure-remodeling complex subunit rsc1 (rsc1) of Schizosaccharomyces pombe (strain 972 / ATCC 24843) (Fission yeast).